A 240-amino-acid polypeptide reads, in one-letter code: Probable septum site-determining protein MinC (240 aa).

Belongs to the MinC family. As to quaternary structure, interacts with MinD and FtsZ.

In terms of biological role, cell division inhibitor that blocks the formation of polar Z ring septums. Rapidly oscillates between the poles of the cell to destabilize FtsZ filaments that have formed before they mature into polar Z rings. Prevents FtsZ polymerization. The protein is Probable septum site-determining protein MinC of Buchnera aphidicola subsp. Cinara cedri (strain Cc).